Consider the following 117-residue polypeptide: Transcription elongation factor SPT4 (117 aa).

Ala2 carries the N-acetylalanine modification. The interval Ala2–Leu40 is interaction with SUPT5H. Zn(2+) contacts are provided by Cys16, Cys19, Cys33, and Cys36. Residues Cys16–Cys36 form a C4-type zinc finger.

Belongs to the SPT4 family. Interacts with SUPT5H to form DSIF. DSIF interacts with the positive transcription elongation factor b complex (P-TEFb complex), which is composed of CDK9 and cyclin-T (CCNT1 or CCNT2). DSIF interacts with RNA polymerase II, and this interaction is reduced by phosphorylation of the C-terminal domain (CTD) of POLR2A by P-TEFb. DSIF also interacts with the NELF complex, which is composed of NELFA, NELFB, NELFD and NELFE, and this interaction occurs following prior binding of DSIF to RNA polymerase II. DSIF also interacts with PRMT1/HRMT1L2, TATSF1, RNGTT/CAP1A, PRMT5/SKB1, SUPT6H, and can interact with PIN1. In terms of processing, ubiquitinated by UBR5 when not assembled in the DSIF complex, leading to its degradation: UBR5 recognizes and binds a degron that is not accessible when SUPT4H1 is part of the DSIF complex.

The protein resides in the nucleus. Component of the DRB sensitivity-inducing factor complex (DSIF complex), which regulates mRNA processing and transcription elongation by RNA polymerase II. DSIF positively regulates mRNA capping by stimulating the mRNA guanylyltransferase activity of RNGTT/CAP1A. DSIF also acts cooperatively with the negative elongation factor complex (NELF complex) to enhance transcriptional pausing at sites proximal to the promoter. Transcriptional pausing may facilitate the assembly of an elongation competent RNA polymerase II complex. DSIF and NELF promote pausing by inhibition of the transcription elongation factor TFIIS/S-II. TFIIS/S-II binds to RNA polymerase II at transcription pause sites and stimulates the weak intrinsic nuclease activity of the enzyme. Cleavage of blocked transcripts by RNA polymerase II promotes the resumption of transcription from the new 3' terminus and may allow repeated attempts at transcription through natural pause sites. This Pongo abelii (Sumatran orangutan) protein is Transcription elongation factor SPT4 (SUPT4H1).